The following is a 139-amino-acid chain: Superoxide dismutase [Cu-Zn] (139 aa).

Cysteine 6 carries the S-palmitoyl cysteine lipid modification. Cu cation is bound by residues histidine 47 and histidine 49. Zn(2+)-binding residues include histidine 72, histidine 81, and aspartate 84. Residue histidine 114 coordinates Cu cation. Basic and acidic residues predominate over residues 118–129 (DDLGKGGNDESL). A disordered region spans residues 118-139 (DDLGKGGNDESLKTGNAGGRMA).

Belongs to the Cu-Zn superoxide dismutase family. Homodimer. Cu cation serves as cofactor. Requires Zn(2+) as cofactor.

It is found in the cytoplasm. It localises to the nucleus. The enzyme catalyses 2 superoxide + 2 H(+) = H2O2 + O2. Destroys radicals which are normally produced within the cells and which are toxic to biological systems. The polypeptide is Superoxide dismutase [Cu-Zn] (sod1) (Lampanyctus crocodilus (Jewel lanternfish)).